The primary structure comprises 267 residues: Tryptophan synthase alpha chain (267 aa).

Residues glutamate 43 and aspartate 54 each act as proton acceptor in the active site.

Belongs to the TrpA family. As to quaternary structure, tetramer of two alpha and two beta chains.

The catalysed reaction is (1S,2R)-1-C-(indol-3-yl)glycerol 3-phosphate + L-serine = D-glyceraldehyde 3-phosphate + L-tryptophan + H2O. Its pathway is amino-acid biosynthesis; L-tryptophan biosynthesis; L-tryptophan from chorismate: step 5/5. Its function is as follows. The alpha subunit is responsible for the aldol cleavage of indoleglycerol phosphate to indole and glyceraldehyde 3-phosphate. The protein is Tryptophan synthase alpha chain of Bacillus pumilus (strain SAFR-032).